A 393-amino-acid chain; its full sequence is tRNA(Met) cytidine acetate ligase (393 aa).

The ATP site is built by glycine 81, asparagine 142, and arginine 167.

Belongs to the TmcAL family.

The protein localises to the cytoplasm. The enzyme catalyses cytidine(34) in elongator tRNA(Met) + acetate + ATP = N(4)-acetylcytidine(34) in elongator tRNA(Met) + AMP + diphosphate. Its function is as follows. Catalyzes the formation of N(4)-acetylcytidine (ac(4)C) at the wobble position of elongator tRNA(Met), using acetate and ATP as substrates. First activates an acetate ion to form acetyladenylate (Ac-AMP) and then transfers the acetyl group to tRNA to form ac(4)C34. The chain is tRNA(Met) cytidine acetate ligase from Bacillus mycoides (strain KBAB4) (Bacillus weihenstephanensis).